We begin with the raw amino-acid sequence, 528 residues long: GMP synthase [glutamine-hydrolyzing] (528 aa).

In terms of domain architecture, Glutamine amidotransferase type-1 spans 13–204; it reads AIVILDFGSQ…VYHICGCEPD (192 aa). Cysteine 90 (nucleophile) is an active-site residue. Catalysis depends on residues histidine 178 and glutamate 180. The GMPS ATP-PPase domain maps to 205-403; that stretch reads WTTEAFIDEA…LGLPEEIVSR (199 aa). 232-238 contributes to the ATP binding site; it reads SGGVDSS.

Homodimer.

It catalyses the reaction XMP + L-glutamine + ATP + H2O = GMP + L-glutamate + AMP + diphosphate + 2 H(+). The protein operates within purine metabolism; GMP biosynthesis; GMP from XMP (L-Gln route): step 1/1. Its function is as follows. Catalyzes the synthesis of GMP from XMP. This chain is GMP synthase [glutamine-hydrolyzing], found in Synechococcus sp. (strain CC9311).